The primary structure comprises 137 residues: Large ribosomal subunit protein uL16 (137 aa).

This sequence belongs to the universal ribosomal protein uL16 family. In terms of assembly, part of the 50S ribosomal subunit.

Its function is as follows. Binds 23S rRNA and is also seen to make contacts with the A and possibly P site tRNAs. The polypeptide is Large ribosomal subunit protein uL16 (Hydrogenovibrio crunogenus (strain DSM 25203 / XCL-2) (Thiomicrospira crunogena)).